A 78-amino-acid chain; its full sequence is Acyl carrier protein (78 aa).

One can recognise a Carrier domain in the interval 4 to 78; the sequence is AQIKEKVYDI…QQAIDYIVKK (75 aa). Ser39 carries the post-translational modification O-(pantetheine 4'-phosphoryl)serine.

The protein belongs to the acyl carrier protein (ACP) family. 4'-phosphopantetheine is transferred from CoA to a specific serine of apo-ACP by AcpS. This modification is essential for activity because fatty acids are bound in thioester linkage to the sulfhydryl of the prosthetic group.

The protein resides in the cytoplasm. It functions in the pathway lipid metabolism; fatty acid biosynthesis. In terms of biological role, carrier of the growing fatty acid chain in fatty acid biosynthesis. The protein is Acyl carrier protein of Chlorobium phaeobacteroides (strain DSM 266 / SMG 266 / 2430).